A 639-amino-acid polypeptide reads, in one-letter code: Chaperone protein DnaK (639 aa).

Phosphothreonine; by autocatalysis is present on threonine 197. The disordered stretch occupies residues serine 600–lysine 639. A compositionally biased stretch (low complexity) spans asparagine 613–glycine 624. A compositionally biased stretch (acidic residues) spans asparagine 629–lysine 639.

It belongs to the heat shock protein 70 family.

Functionally, acts as a chaperone. In Bacteroides fragilis (strain ATCC 25285 / DSM 2151 / CCUG 4856 / JCM 11019 / LMG 10263 / NCTC 9343 / Onslow / VPI 2553 / EN-2), this protein is Chaperone protein DnaK.